The chain runs to 141 residues: Sec-independent protein translocase protein TatB (141 aa).

Residues 1 to 21 traverse the membrane as a helical segment; it reads MFGISFSELLLVGLVALLVLG. The segment at 74 to 141 is disordered; sequence EAQKLLAPLT…SPPSETPRNP (68 aa). Residues 89-115 are compositionally biased toward pro residues; the sequence is QETPPPAAESPAPSVPTPPPTSTPAVP. Low complexity predominate over residues 116–129; sequence PADAAAPPAVAAST. The segment covering 130 to 141 has biased composition (pro residues); sequence PPSPPSETPRNP.

It belongs to the TatB family. The Tat system comprises two distinct complexes: a TatABC complex, containing multiple copies of TatA, TatB and TatC subunits, and a separate TatA complex, containing only TatA subunits. Substrates initially bind to the TatABC complex, which probably triggers association of the separate TatA complex to form the active translocon.

The protein resides in the cell inner membrane. In terms of biological role, part of the twin-arginine translocation (Tat) system that transports large folded proteins containing a characteristic twin-arginine motif in their signal peptide across membranes. Together with TatC, TatB is part of a receptor directly interacting with Tat signal peptides. TatB may form an oligomeric binding site that transiently accommodates folded Tat precursor proteins before their translocation. This is Sec-independent protein translocase protein TatB from Pseudomonas aeruginosa (strain ATCC 15692 / DSM 22644 / CIP 104116 / JCM 14847 / LMG 12228 / 1C / PRS 101 / PAO1).